Here is a 505-residue protein sequence, read N- to C-terminus: Catalase (505 aa).

Positions 1-25 (MSKQDGKLTGLFGAPVSDRENSMTA) are disordered. Active-site residues include His-56 and Asn-129. Residue Tyr-339 participates in heme binding.

It belongs to the catalase family. As to quaternary structure, homodimer. Heme serves as cofactor.

The catalysed reaction is 2 H2O2 = O2 + 2 H2O. Its function is as follows. Decomposes hydrogen peroxide into water and oxygen; serves to protect cells from the toxic effects of hydrogen peroxide. The protein is Catalase (katA) of Staphylococcus warneri.